The primary structure comprises 316 residues: 4-hydroxy-3-methylbut-2-enyl diphosphate reductase (316 aa).

Cys12 is a [4Fe-4S] cluster binding site. (2E)-4-hydroxy-3-methylbut-2-enyl diphosphate is bound by residues His41 and His74. Residues His41 and His74 each coordinate dimethylallyl diphosphate. Residues His41 and His74 each coordinate isopentenyl diphosphate. A [4Fe-4S] cluster-binding site is contributed by Cys96. (2E)-4-hydroxy-3-methylbut-2-enyl diphosphate is bound at residue His124. Dimethylallyl diphosphate is bound at residue His124. His124 contacts isopentenyl diphosphate. Glu126 (proton donor) is an active-site residue. Thr169 serves as a coordination point for (2E)-4-hydroxy-3-methylbut-2-enyl diphosphate. Cys199 contributes to the [4Fe-4S] cluster binding site. Positions 227, 228, 229, and 271 each coordinate (2E)-4-hydroxy-3-methylbut-2-enyl diphosphate. Positions 227, 228, 229, and 271 each coordinate dimethylallyl diphosphate. Residues Ser227, Ser228, Asn229, and Ser271 each contribute to the isopentenyl diphosphate site.

It belongs to the IspH family. [4Fe-4S] cluster serves as cofactor.

It carries out the reaction isopentenyl diphosphate + 2 oxidized [2Fe-2S]-[ferredoxin] + H2O = (2E)-4-hydroxy-3-methylbut-2-enyl diphosphate + 2 reduced [2Fe-2S]-[ferredoxin] + 2 H(+). The enzyme catalyses dimethylallyl diphosphate + 2 oxidized [2Fe-2S]-[ferredoxin] + H2O = (2E)-4-hydroxy-3-methylbut-2-enyl diphosphate + 2 reduced [2Fe-2S]-[ferredoxin] + 2 H(+). It participates in isoprenoid biosynthesis; dimethylallyl diphosphate biosynthesis; dimethylallyl diphosphate from (2E)-4-hydroxy-3-methylbutenyl diphosphate: step 1/1. Its pathway is isoprenoid biosynthesis; isopentenyl diphosphate biosynthesis via DXP pathway; isopentenyl diphosphate from 1-deoxy-D-xylulose 5-phosphate: step 6/6. Functionally, catalyzes the conversion of 1-hydroxy-2-methyl-2-(E)-butenyl 4-diphosphate (HMBPP) into a mixture of isopentenyl diphosphate (IPP) and dimethylallyl diphosphate (DMAPP). Acts in the terminal step of the DOXP/MEP pathway for isoprenoid precursor biosynthesis. This Stenotrophomonas maltophilia (strain R551-3) protein is 4-hydroxy-3-methylbut-2-enyl diphosphate reductase.